A 960-amino-acid polypeptide reads, in one-letter code: MDSIPNEDDLEKLLVAEQNVPYGKNYESFEDEENYLLELRNANALENLEHRSIPNDLFHSSQPVGSPTRNGDDIPSTLDLYSSDNAAIDTDISEDETINQRHAPQTDYRYPNTSANPKMGLEESMDIDMPSIDLDISNAAAFPRDSNLLFRNYNSHTKTSEKGSPVNFEKENQDSNVLFSTGRTSVLHIDAEQSQTNNTVTPLKDDALSLFSFENDVNGAVNDNSLDQKLSASKNSQRVSLPFFSKIELDEGSSFSGPKISARTSSGKIIYFPKKKNRHSDGLLLQPKRLADEISQVNEIGKDFNQDLLNSVRIWSENFLIVSKEKSVALKTEKLDSLQITNCTTKPQSQKLWVDTYRPQLFRDLLGDERVHRAAMHWIKAWDPCVFGKSRLQPSKSMRFNPRFTNITSDSDRPDKRIMMLTGLAGAGKTTLAHVIAHQAGYKVLEINASDDRTAHTVHEKVSSAISNHSALSSQPTCVIVDEIDGGDPAFVRALLSLLESDEKATEYSQAGNSKKKKKFKKLCRPIICICNDLYTPALRPLRPYAQIIYFRPPPQASLVGRLRTICRNENIAVDSRSLTLLTDIYNSDIRSCINSLQLLSLNNKRIDSETIKLLQPKSNSFSTSSLIQSLFLQLDNKQIRAIEASQPTYSHLDALLARIDGANDSESVLMNCFHTYLDLPFTDSLLSKPALTSEWLYFFDQLHSQCYKGNYELWRYIPYSIIHFHYLYATPEKCRLPHPPRSDLEALKLYRTRKEILDSFISTLNAYENQMHGERSILLELIRTILITINPTLKQKEDSMPRSALPSKIEHAINILNHYNLRFQQLPVGDGNYVYRLEPPLDELVWDAPTSSYSVRQMLSQELLKKRLADIKKQTLTDNPTSSNSSRKRKDFNSGKAIKRDFFGRIISEPKSEAVTSNNAALNTGDHPVSIKHAINIKFHDGFSNAVRKPISLNEILNF.

Disordered regions lie at residues 56–79 (DLFHSSQPVGSPTRNGDDIPSTLD) and 91–113 (DISEDETINQRHAPQTDYRYPNT). Residues 58 to 69 (FHSSQPVGSPTR) are compositionally biased toward polar residues. ATP is bound at residue 423–430 (GLAGAGKT).

The protein belongs to the activator 1 small subunits family. CTF18 subfamily. In terms of assembly, component of the ctf18-RFC complex which consists of ctf18, ctf8, dcc1, rfc2, rfc3, rfc4 and rfc5.

It localises to the nucleus. Essential for the fidelity of chromosome transmission. Required for the DNA replication block checkpoint. Replication factor C (RFC) complex has an essential but redundant activity in sister chromatid cohesion establishment. Acts as a PCNA loader, loading PCNA onto primed templates. An RFC-like complex (ctf18-RFC) is formed where ctf18 replaces rfc1 in the RFC complex along with the association of dcc1 and ctf8. This complex is required for efficient establishment of chromosome cohesion during S-phase. In Schizosaccharomyces pombe (strain 972 / ATCC 24843) (Fission yeast), this protein is Chromosome transmission fidelity protein 18 (ctf18).